Reading from the N-terminus, the 693-residue chain is Protein FAM13A (693 aa).

A Phosphoserine modification is found at S19. Disordered regions lie at residues 56–89 and 136–233; these read SNAG…KKQD and RSKP…VPDM. Residues 69–78 show a composition bias toward polar residues; sequence GPSSASSIPT. Over residues 159 to 171 the composition is skewed to low complexity; sequence LSMESLSSMQSQE. A compositionally biased stretch (basic and acidic residues) spans 184–197; the sequence is ESKEIERGGRDTQH. 2 positions are modified to phosphoserine: S267 and S287. Disordered stretches follow at residues 302–331 and 396–424; these read DTEV…DEQE and ISEE…EKED. S397 carries the post-translational modification Phosphoserine. At T402 the chain carries Phosphothreonine. Positions 408–418 are enriched in polar residues; that stretch reads RSNTLPKSFGS.

It belongs to the FAM13 family. In terms of assembly, interacts with ANXA2. In terms of tissue distribution, expressed in the mammary gland, with similar levels at all stages of development, including pregnancy, lactation and involution.

Functionally, (Microbial infection) Plays a role in the clearance of Pseudomonas aeruginosa by macrophages. In complex with ANXA2, promotes activation of Rho GTPases following P.aeruginosa infection. This is Protein FAM13A (Fam13a) from Mus musculus (Mouse).